A 558-amino-acid polypeptide reads, in one-letter code: Urocanate hydratase (558 aa).

NAD(+) is bound by residues 53–54 (GG), glutamine 131, 177–179 (GMG), glutamate 197, arginine 202, 243–244 (NA), 264–268 (QTSAH), 274–275 (YL), and tyrosine 323. The active site involves cysteine 411. NAD(+) is bound at residue glycine 493.

This sequence belongs to the urocanase family. NAD(+) serves as cofactor.

The protein localises to the cytoplasm. It catalyses the reaction 4-imidazolone-5-propanoate = trans-urocanate + H2O. The protein operates within amino-acid degradation; L-histidine degradation into L-glutamate; N-formimidoyl-L-glutamate from L-histidine: step 2/3. In terms of biological role, catalyzes the conversion of urocanate to 4-imidazolone-5-propionate. This chain is Urocanate hydratase, found in Idiomarina loihiensis (strain ATCC BAA-735 / DSM 15497 / L2-TR).